Consider the following 544-residue polypeptide: POTE ankyrin domain family member B2 (544 aa).

ANK repeat units follow at residues 135 to 167 (QKRTALHLASANGNSEVVQLLLDRRCQLNVLDN), 168 to 200 (KKRTALIKAVQCQEDECVLMLLEHGADGNIQDE), 201 to 233 (YGNTALHYAIYNEDKLMAKALLLYGADIESKNK), 234 to 266 (CGLTPLLLGVHEQKQEVVKFLIKKKANLNALDR), and 267 to 299 (YGRTALILAVCCGSASIVNLLLEQNVDVSSQDL). The segment at 332 to 457 (SSENSNPEQD…NTGISQDEIL (126 aa)) is disordered. Basic and acidic residues-rich tracts occupy residues 340–355 (QDLKLTSEEESQRLKV) and 364–375 (MSQEPEINKDCD). The segment covering 439–457 (TQKQLSEEQNTGISQDEIL) has biased composition (polar residues).

The protein belongs to the POTE family.

The polypeptide is POTE ankyrin domain family member B2 (POTEB2) (Homo sapiens (Human)).